Consider the following 351-residue polypeptide: UDP-3-O-acylglucosamine N-acyltransferase (351 aa).

The active-site Proton acceptor is the His-240.

The protein belongs to the transferase hexapeptide repeat family. LpxD subfamily. As to quaternary structure, homotrimer.

It carries out the reaction a UDP-3-O-[(3R)-3-hydroxyacyl]-alpha-D-glucosamine + a (3R)-hydroxyacyl-[ACP] = a UDP-2-N,3-O-bis[(3R)-3-hydroxyacyl]-alpha-D-glucosamine + holo-[ACP] + H(+). Its pathway is bacterial outer membrane biogenesis; LPS lipid A biosynthesis. Its function is as follows. Catalyzes the N-acylation of UDP-3-O-acylglucosamine using 3-hydroxyacyl-ACP as the acyl donor. Is involved in the biosynthesis of lipid A, a phosphorylated glycolipid that anchors the lipopolysaccharide to the outer membrane of the cell. The chain is UDP-3-O-acylglucosamine N-acyltransferase from Pseudomonas fluorescens (strain ATCC BAA-477 / NRRL B-23932 / Pf-5).